A 479-amino-acid polypeptide reads, in one-letter code: MTYQAVIGLEVHLQLNTRSKIFSACPADYHGAGPNEFTDPLTLGLPGTLPTLNRRAVELAMMFGLGLGCDVSGFTQFHRKNYFYPDAPKNFQLSQYDRPIARDGYLDVPGEGGPERIRIKRAHLEDDAGKLVHPTYAPYSLLDLNRAGSALIEMVTEADITGPEQARAFLESVQAIAQSLGVSDATPEEGKMRCDVNISIHKPGEPWGTKVEVKNLNSFRSVARAIEYEAARQAKVLDAGGIITQDTLGWDEGGQKTFLMRTKEGEADYRYFPEPDLPPLDITPEWIAEVRARMPELPAQKLERYRAAGVRESDAQTLSLSVSLSKFYDEALKSGSDTQKPDAQKLANWLLTDVAGALAAQEKGVEDSDLQPAHLAALVGLIDAGTISGKIAKDLLPDVLAGHDPAQLVQERGLSVVTDTGAIDAAIDAAMEADPATVEKVRGGNAKAMNALFGPVMKAMGGKAKPEVVRERLTAKLGL.

Belongs to the GatB/GatE family. GatB subfamily. In terms of assembly, heterotrimer of A, B and C subunits.

The enzyme catalyses L-glutamyl-tRNA(Gln) + L-glutamine + ATP + H2O = L-glutaminyl-tRNA(Gln) + L-glutamate + ADP + phosphate + H(+). It catalyses the reaction L-aspartyl-tRNA(Asn) + L-glutamine + ATP + H2O = L-asparaginyl-tRNA(Asn) + L-glutamate + ADP + phosphate + 2 H(+). In terms of biological role, allows the formation of correctly charged Asn-tRNA(Asn) or Gln-tRNA(Gln) through the transamidation of misacylated Asp-tRNA(Asn) or Glu-tRNA(Gln) in organisms which lack either or both of asparaginyl-tRNA or glutaminyl-tRNA synthetases. The reaction takes place in the presence of glutamine and ATP through an activated phospho-Asp-tRNA(Asn) or phospho-Glu-tRNA(Gln). This is Aspartyl/glutamyl-tRNA(Asn/Gln) amidotransferase subunit B from Deinococcus radiodurans (strain ATCC 13939 / DSM 20539 / JCM 16871 / CCUG 27074 / LMG 4051 / NBRC 15346 / NCIMB 9279 / VKM B-1422 / R1).